The following is a 260-amino-acid chain: Large ribosomal subunit protein eL8A (260 aa).

The tract at residues 1-34 (MPSSKKVAPAPLATKSKASTSTKNPLFESTPKNF) is disordered.

This sequence belongs to the eukaryotic ribosomal protein eL8 family. Component of the large ribosomal subunit. Mature ribosomes consist of a small (40S) and a large (60S) subunit. The 40S subunit contains about 32 different proteins and 1 molecule of RNA (18S). The 60S subunit contains 45 different proteins and 3 molecules of RNA (25S, 5.8S and 5S).

It localises to the cytoplasm. Functionally, component of the ribosome, a large ribonucleoprotein complex responsible for the synthesis of proteins in the cell. The small ribosomal subunit (SSU) binds messenger RNAs (mRNAs) and translates the encoded message by selecting cognate aminoacyl-transfer RNA (tRNA) molecules. The large subunit (LSU) contains the ribosomal catalytic site termed the peptidyl transferase center (PTC), which catalyzes the formation of peptide bonds, thereby polymerizing the amino acids delivered by tRNAs into a polypeptide chain. The nascent polypeptides leave the ribosome through a tunnel in the LSU and interact with protein factors that function in enzymatic processing, targeting, and the membrane insertion of nascent chains at the exit of the ribosomal tunnel. The chain is Large ribosomal subunit protein eL8A from Candida albicans (strain SC5314 / ATCC MYA-2876) (Yeast).